The chain runs to 455 residues: Major facilitator superfamily domain-containing protein 10 (455 aa).

The next 11 helical transmembrane spans lie at 27 to 47 (VVFL…PLLP), 86 to 106 (VLFG…CAPL), 113 to 135 (CLGR…AVWA), 148 to 168 (LIGG…ADLG), 176 to 196 (GMAV…MLGA), 202 to 222 (MAPW…FCFL), 275 to 295 (LGLV…TLSF), 310 to 327 (KMFF…GAYA), 336 to 356 (VAAV…IGWG), 359 to 379 (LPVL…VVPC), and 421 to 441 (LAGA…PFFL).

The protein belongs to the major facilitator superfamily. Expressed in luminal membrane of renal tubules (at protein level). Detected in all tissues tested with higher expression in heart, splee, kidney, leukocytes and prostate.

It localises to the nucleus inner membrane. Its subcellular location is the cell membrane. In terms of biological role, probable organic anion transporter which may serve as a transporter for some non-steroidal anti-inflammatory drugs (NSAIDs) as well as other organic anions across the luminal membranes of renal proximal tubules at the final excretion step into the urine. The chain is Major facilitator superfamily domain-containing protein 10 (MFSD10) from Homo sapiens (Human).